The sequence spans 883 residues: Phosphoenolpyruvate carboxylase (883 aa).

Catalysis depends on residues histidine 138 and lysine 546.

Belongs to the PEPCase type 1 family. It depends on Mg(2+) as a cofactor.

The enzyme catalyses oxaloacetate + phosphate = phosphoenolpyruvate + hydrogencarbonate. Functionally, forms oxaloacetate, a four-carbon dicarboxylic acid source for the tricarboxylic acid cycle. The chain is Phosphoenolpyruvate carboxylase from Salmonella gallinarum (strain 287/91 / NCTC 13346).